A 125-amino-acid polypeptide reads, in one-letter code: Small ribosomal subunit protein uS13 (125 aa).

A disordered region spans residues 93–125 (RRGLPVRGQRTKTNARTRKGPKRTVAGKKKAGR).

Belongs to the universal ribosomal protein uS13 family. In terms of assembly, part of the 30S ribosomal subunit. Forms a loose heterodimer with protein S19. Forms two bridges to the 50S subunit in the 70S ribosome.

Functionally, located at the top of the head of the 30S subunit, it contacts several helices of the 16S rRNA. In the 70S ribosome it contacts the 23S rRNA (bridge B1a) and protein L5 of the 50S subunit (bridge B1b), connecting the 2 subunits; these bridges are implicated in subunit movement. Contacts the tRNAs in the A and P-sites. This is Small ribosomal subunit protein uS13 from Renibacterium salmoninarum (strain ATCC 33209 / DSM 20767 / JCM 11484 / NBRC 15589 / NCIMB 2235).